A 183-amino-acid chain; its full sequence is Inner membrane protein p54 (183 aa).

The helical transmembrane segment at 32–52 (YTILIAIVVLVIIIIVLIYLF) threads the bilayer. Residues 81–157 (EVTPQPGTSK…PYTTVTTQNT (77 aa)) are disordered. Over residues 111–122 (RPATNKPVTDNP) the composition is skewed to polar residues. Over residues 130-143 (ATGGPAAAPAAASA) the composition is skewed to low complexity. Positions 149–161 (YTTVTTQNTASQT) are interaction with host DYNLL1.

It belongs to the asfivirus envelope protein p54 family. In terms of assembly, interacts with the host light chain cytoplasmic dynein DYNLL1; this interaction is critical for intracellular microtubule-dependent virus transport toward viral factories.

The protein resides in the virion membrane. It is found in the host cytoplasm. Its subcellular location is the host cytoskeleton. It localises to the host endoplasmic reticulum membrane. Its function is as follows. Inner envelope protein involved, through its interaction with host dynein, in the intracellular microtubule-dependent transport of viral capsid toward viral factories. Seems to induce caspase-3 activation and apoptosis. Plays a role in virion morphogenesis by recruiting and transforming the host ER membranes into the precursors of the viral envelope. Involved in virus attachment to the host cell. This chain is Inner membrane protein p54, found in African swine fever virus (strain Badajoz 1971 Vero-adapted) (Ba71V).